Reading from the N-terminus, the 190-residue chain is Probable chorismate pyruvate-lyase (190 aa).

Positions 74, 112, and 173 each coordinate substrate.

Belongs to the UbiC family.

The protein resides in the cytoplasm. It carries out the reaction chorismate = 4-hydroxybenzoate + pyruvate. It functions in the pathway cofactor biosynthesis; ubiquinone biosynthesis. Functionally, removes the pyruvyl group from chorismate, with concomitant aromatization of the ring, to provide 4-hydroxybenzoate (4HB) for the ubiquinone pathway. This chain is Probable chorismate pyruvate-lyase, found in Bordetella bronchiseptica (strain ATCC BAA-588 / NCTC 13252 / RB50) (Alcaligenes bronchisepticus).